The following is a 625-amino-acid chain: Cytochrome c oxidase subunit 1 (625 aa).

The chain crosses the membrane as a helical span at residues 23-43; the sequence is IAIMYLIAGTLFFVKAGVMAL. His69 is a Fe(II)-heme a binding site. Transmembrane regions (helical) follow at residues 72-92, 99-119, 151-171, 195-215, 240-260, and 272-292; these read IMLF…VIPL, VAFP…GLLL, FYVL…INFL, FISS…LALL, IFWI…FGII, and LFGY…GFMV. Residues His246 and Tyr250 each coordinate Cu cation. Residues 246–250 constitute a cross-link (1'-histidyl-3'-tyrosine (His-Tyr)); sequence HPEVY. Residues His295 and His296 each contribute to the Cu cation site. 2 helical membrane passes run 309–329 and 343–363; these read IFAV…FNWL and MLFA…GVML. His381 is a heme a3 binding site. 5 helical membrane passes run 382-402, 417-437, 460-480, 551-571, and 577-597; these read FHYI…FYWY, LFFW…HLLG, ISTI…INVI, SILP…LIML, and IINP…CMFV. Position 383 (His383) interacts with Fe(II)-heme a.

This sequence belongs to the heme-copper respiratory oxidase family.

It localises to the cell membrane. The enzyme catalyses 4 Fe(II)-[cytochrome c] + O2 + 8 H(+)(in) = 4 Fe(III)-[cytochrome c] + 2 H2O + 4 H(+)(out). It functions in the pathway energy metabolism; oxidative phosphorylation. Its function is as follows. Cytochrome c oxidase is the component of the respiratory chain that catalyzes the reduction of oxygen to water. Subunits 1-3 form the functional core of the enzyme complex. CO I is the catalytic subunit of the enzyme. Electrons originating in cytochrome c are transferred via the copper A center of subunit 2 and heme A of subunit 1 to the bimetallic center formed by heme A3 and copper B. This Alkalihalophilus pseudofirmus (strain ATCC BAA-2126 / JCM 17055 / OF4) (Bacillus pseudofirmus) protein is Cytochrome c oxidase subunit 1 (ctaD).